A 215-amino-acid polypeptide reads, in one-letter code: Urease accessory protein UreG 2 (215 aa).

Residue 11-18 participates in GTP binding; it reads GPVGSGKT.

This sequence belongs to the SIMIBI class G3E GTPase family. UreG subfamily. As to quaternary structure, homodimer. UreD, UreF and UreG form a complex that acts as a GTP-hydrolysis-dependent molecular chaperone, activating the urease apoprotein by helping to assemble the nickel containing metallocenter of UreC. The UreE protein probably delivers the nickel.

It is found in the cytoplasm. Facilitates the functional incorporation of the urease nickel metallocenter. This process requires GTP hydrolysis, probably effectuated by UreG. This is Urease accessory protein UreG 2 from Methylorubrum populi (strain ATCC BAA-705 / NCIMB 13946 / BJ001) (Methylobacterium populi).